Reading from the N-terminus, the 428-residue chain is Histone deacetylase 3 (428 aa).

A histone deacetylase region spans residues 3–316 (NRTSYFYDPD…WTFETSLLLE (314 aa)). H17, G21, and K25 together coordinate 1D-myo-inositol 1,4,5,6-tetrakisphosphate. H135 is a catalytic residue. Residues D170, H172, and D259 each coordinate Zn(2+). R265 contacts 1D-myo-inositol 1,4,5,6-tetrakisphosphate. The disordered stretch occupies residues 385–428 (LNYERNDEPDPDERGAEENYTRPEAANEFYDGDHDNDKESDVEI). Basic and acidic residues-rich tracts occupy residues 386 to 405 (NYER…ENYT) and 415 to 428 (DGDH…DVEI).

The protein belongs to the histone deacetylase family. HD type 1 subfamily.

It localises to the nucleus. The protein resides in the chromosome. Its subcellular location is the cytoplasm. The protein localises to the cytosol. The catalysed reaction is N(6)-acetyl-L-lysyl-[histone] + H2O = L-lysyl-[histone] + acetate. With respect to regulation, inositol tetraphosphate (1D-myo-inositol 1,4,5,6-tetrakisphosphate) promotes the histone deacetylase activity by acting as an intermolecular glue between hdac3 and N-Cor repressor complex components. Responsible for the deacetylation of lysine residues on the N-terminal part of the core histones (H2A, H2B, H3 and H4). Histone deacetylation gives a tag for epigenetic repression and plays an important role in transcriptional regulation, cell cycle progression and developmental events. Histone deacetylases act via the formation of large multiprotein complexes, such as N-Cor repressor complex, which activate the histone deacetylase activity. May play a role in the regulation of the circadian clock in a deacetylase activity-independent manner. This chain is Histone deacetylase 3 (hdac3), found in Tetraodon nigroviridis (Spotted green pufferfish).